Here is a 255-residue protein sequence, read N- to C-terminus: Ribonuclease HII (255 aa).

One can recognise an RNase H type-2 domain in the interval 70–255 (EYIAGVDEVG…FEPVKKILLK (186 aa)). A divalent metal cation-binding residues include D76, E77, and D168.

It belongs to the RNase HII family. Requires Mn(2+) as cofactor. Mg(2+) is required as a cofactor.

Its subcellular location is the cytoplasm. It catalyses the reaction Endonucleolytic cleavage to 5'-phosphomonoester.. Functionally, endonuclease that specifically degrades the RNA of RNA-DNA hybrids. The polypeptide is Ribonuclease HII (Ligilactobacillus salivarius (strain UCC118) (Lactobacillus salivarius)).